The following is a 932-amino-acid chain: Progesterone receptor (932 aa).

Residues 1–164 (MTELKAKGPR…PATQGVLSPL (164 aa)) form an AF3; mediates transcriptional activation region. The segment at 1-254 (MTELKAKGPR…GGAAAGGAAA (254 aa)) is disordered. The interval 1–565 (MTELKAKGPR…YSFESLPQKI (565 aa)) is modulating, Pro-Rich. Ser20 carries the post-translational modification Phosphoserine. The short motif at 55 to 59 (LDGLL) is the LXXL motif 1 element. Ser81 is modified (phosphoserine). The span at 88–103 (SRAEATRGAGGSSSSP) shows a compositional bias: low complexity. The LXXL motif 2 motif lies at 115-119 (LDTLL). A phosphoserine mark is found at Ser130 and Ser162. Residues 165–304 (MSRSGGKAGD…LATTVMDFIH (140 aa)) are mediates transcriptional transrepression. The Nuclear localization signal motif lies at 183–187 (KVLPQ). Residues Ser190 and Ser213 each carry the phosphoserine modification. Acidic residues predominate over residues 220-231 (EVEEEDGSESED). Residues 232–254 (SAGPLLKGKPRALGGAAAGGAAA) show a composition bias toward low complexity. Phosphoserine; by MAPK1 is present on Ser293. Low complexity predominate over residues 334 to 349 (AASAFAPPRSSPSASS). The disordered stretch occupies residues 334 to 356 (AASAFAPPRSSPSASSTPVAVGD). At Ser344 the chain carries Phosphoserine; by MAPK. Lys387 is covalently cross-linked (Glycyl lysine isopeptide (Lys-Gly) (interchain with G-Cter in SUMO); alternate). A Glycyl lysine isopeptide (Lys-Gly) (interchain with G-Cter in ubiquitin); alternate cross-link involves residue Lys387. Disordered regions lie at residues 414–451 (PDFPLGPPPPLPPRAPPSRPGEAAVTAAPASASVSSAS) and 468–499 (PPQQGPFAPPPSKAPGAGGCLPPRDGLPSTAA). A compositionally biased stretch (pro residues) spans 417-432 (PLGPPPPLPPRAPPSR). Residues 433–451 (PGEAAVTAAPASASVSSAS) show a composition bias toward low complexity. An AF1; mediates transcriptional activation region spans residues 455-545 (STLECILYKA…VYPPYLNYLR (91 aa)). Pro residues predominate over residues 470-480 (QQGPFAPPPSK). A Glycyl lysine isopeptide (Lys-Gly) (interchain with G-Cter in SUMO) cross-link involves residue Lys530. 2 NR C4-type zinc fingers span residues 566–586 (CLICGDEASGCHYGVLTCGSC) and 602–626 (CAGRNDCIVDKIRRKNCPACRLRKC). Residues 566-638 (CLICGDEASG…AGMVLGGRKF (73 aa)) constitute a DNA-binding region (nuclear receptor). Position 675 is a phosphoserine (Ser675). Positions 678 to 912 (QDIQLIPPLI…EFPEMMSEVI (235 aa)) constitute an NR LBD domain. The interval 686-932 (LINLLMSIEP…MVKPLLFHKK (247 aa)) is AF2; mediates transcriptional activation. Progesterone is bound at residue Arg765.

This sequence belongs to the nuclear hormone receptor family. Interacts with SMARD1 and UNC45A. Interacts with CUEDC2; the interaction promotes ubiquitination, decreases sumoylation, and represses transcriptional activity. Interacts with PIAS3; the interaction promotes sumoylation of PR in a hormone-dependent manner, inhibits DNA-binding, and alters nuclear export. Interacts with SP1; the interaction requires ligand-induced phosphorylation on Ser-344 by ERK1/2-MAPK. Interacts with PRMT2. Interacts with NCOA2 and NCOA1. Interacts with KLF9. Interacts with GTF2B. Post-translationally, phosphorylated on multiple serine sites. Several of these sites are hormone-dependent. Phosphorylation on Ser-293 is highly hormone-dependent and modulates ubiquitination and sumoylation on Lys-387. Phosphorylation on Ser-102 and Ser-344 also requires induction by hormone. Basal phosphorylation on Ser-81, Ser-162 and Ser-190 is increased in response to progesterone and can be phosphorylated in vitro by the CDK2-A1 complex. Phosphorylation at Ser-162 and Ser-293, but not at Ser-190, is impaired during the G(2)/M phase of the cell cycle. Phosphorylation on Ser-344 by ERK1/2 MAPK is required for interaction with SP1. Sumoylation is hormone-dependent and represses transcriptional activity. Sumoylation on all three sites is enhanced by PIAS3. Desumoylated by SENP1. Sumoylation on Lys-387, the main site of sumoylation, is repressed by ubiquitination on the same site, and modulated by phosphorylation at Ser-293. In terms of processing, ubiquitination is hormone-dependent and represses sumoylation on the same site. Promoted by MAPK-mediated phosphorylation on Ser-293. Ubiquitinated by UBR5, leading to its degradation: UBR5 specifically recognizes and binds ligand-bound PGR when it is not associated with coactivators (NCOAs). In presence of NCOAs, the UBR5-degron is not accessible, preventing its ubiquitination and degradation. Post-translationally, palmitoylated by ZDHHC7 and ZDHHC21. Palmitoylation is required for plasma membrane targeting and for rapid intracellular signaling via ERK and AKT kinases and cAMP generation.

Its subcellular location is the nucleus. The protein resides in the cytoplasm. Functionally, the steroid hormones and their receptors are involved in the regulation of eukaryotic gene expression and affect cellular proliferation and differentiation in target tissues. Transcriptional activator of several progesteron-dependent promoters in a variety of cell types. Involved in activation of SRC-dependent MAPK signaling on hormone stimulation. This is Progesterone receptor (PGR) from Hylobates lar (Lar gibbon).